Consider the following 375-residue polypeptide: Dual-specificity RNA methyltransferase RlmN (375 aa).

Glu94 (proton acceptor) is an active-site residue. Residues 100 to 339 (EEDRATLCVS…VTVRKTRGDD (240 aa)) enclose the Radical SAM core domain. An intrachain disulfide couples Cys107 to Cys344. [4Fe-4S] cluster contacts are provided by Cys114, Cys118, and Cys121. S-adenosyl-L-methionine-binding positions include 168–169 (GE), Ser200, 222–224 (SLH), and Asn301. The active-site S-methylcysteine intermediate is Cys344.

The protein belongs to the radical SAM superfamily. RlmN family. [4Fe-4S] cluster is required as a cofactor.

It is found in the cytoplasm. It carries out the reaction adenosine(2503) in 23S rRNA + 2 reduced [2Fe-2S]-[ferredoxin] + 2 S-adenosyl-L-methionine = 2-methyladenosine(2503) in 23S rRNA + 5'-deoxyadenosine + L-methionine + 2 oxidized [2Fe-2S]-[ferredoxin] + S-adenosyl-L-homocysteine. The enzyme catalyses adenosine(37) in tRNA + 2 reduced [2Fe-2S]-[ferredoxin] + 2 S-adenosyl-L-methionine = 2-methyladenosine(37) in tRNA + 5'-deoxyadenosine + L-methionine + 2 oxidized [2Fe-2S]-[ferredoxin] + S-adenosyl-L-homocysteine. Specifically methylates position 2 of adenine 2503 in 23S rRNA and position 2 of adenine 37 in tRNAs. m2A2503 modification seems to play a crucial role in the proofreading step occurring at the peptidyl transferase center and thus would serve to optimize ribosomal fidelity. This Vibrio parahaemolyticus serotype O3:K6 (strain RIMD 2210633) protein is Dual-specificity RNA methyltransferase RlmN.